A 286-amino-acid polypeptide reads, in one-letter code: Pyridoxal kinase PdxY (286 aa).

Ser8 contributes to the substrate binding site. 2 residues coordinate ATP: Asp110 and Glu147. A substrate-binding site is contributed by Asp223.

Belongs to the pyridoxine kinase family. PdxY subfamily. In terms of assembly, homodimer. It depends on Mg(2+) as a cofactor.

The catalysed reaction is pyridoxal + ATP = pyridoxal 5'-phosphate + ADP + H(+). Its pathway is cofactor metabolism; pyridoxal 5'-phosphate salvage; pyridoxal 5'-phosphate from pyridoxal: step 1/1. Functionally, pyridoxal kinase involved in the salvage pathway of pyridoxal 5'-phosphate (PLP). Catalyzes the phosphorylation of pyridoxal to PLP. The protein is Pyridoxal kinase PdxY of Granulibacter bethesdensis (strain ATCC BAA-1260 / CGDNIH1).